The chain runs to 70 residues: Large ribosomal subunit protein bL31 (70 aa).

This sequence belongs to the bacterial ribosomal protein bL31 family. Type A subfamily. Part of the 50S ribosomal subunit.

Binds the 23S rRNA. This chain is Large ribosomal subunit protein bL31, found in Chlorobium chlorochromatii (strain CaD3).